A 312-amino-acid polypeptide reads, in one-letter code: uncharacterized protein (312 aa).

It is found in the mitochondrion. This is an uncharacterized protein from Schizosaccharomyces pombe (strain 972 / ATCC 24843) (Fission yeast).